The sequence spans 359 residues: UDP-N-acetylglucosamine--N-acetylmuramyl-(pentapeptide) pyrophosphoryl-undecaprenol N-acetylglucosamine transferase (359 aa).

Residues 15–17, N127, R164, S192, I246, 265–270, and Q290 contribute to the UDP-N-acetyl-alpha-D-glucosamine site; these read SGG and ALTVSE.

It belongs to the glycosyltransferase 28 family. MurG subfamily.

It is found in the cell membrane. The catalysed reaction is di-trans,octa-cis-undecaprenyl diphospho-N-acetyl-alpha-D-muramoyl-L-alanyl-D-glutamyl-meso-2,6-diaminopimeloyl-D-alanyl-D-alanine + UDP-N-acetyl-alpha-D-glucosamine = di-trans,octa-cis-undecaprenyl diphospho-[N-acetyl-alpha-D-glucosaminyl-(1-&gt;4)]-N-acetyl-alpha-D-muramoyl-L-alanyl-D-glutamyl-meso-2,6-diaminopimeloyl-D-alanyl-D-alanine + UDP + H(+). The protein operates within cell wall biogenesis; peptidoglycan biosynthesis. In terms of biological role, cell wall formation. Catalyzes the transfer of a GlcNAc subunit on undecaprenyl-pyrophosphoryl-MurNAc-pentapeptide (lipid intermediate I) to form undecaprenyl-pyrophosphoryl-MurNAc-(pentapeptide)GlcNAc (lipid intermediate II). This Wigglesworthia glossinidia brevipalpis protein is UDP-N-acetylglucosamine--N-acetylmuramyl-(pentapeptide) pyrophosphoryl-undecaprenol N-acetylglucosamine transferase.